A 243-amino-acid polypeptide reads, in one-letter code: MNTSQDTIYAQPNEHISDFQFDNRVAGVFSDMIRRSVPGYTQIINTIGDFADRFVMPNTQIYDLGCSLGAATLSIRRQIQGRQCRIIAVDNSESMVARCQENLNAYVSDTDVDLVCGDIRDIDIQNASLVVLNFTLQFLPPEDRETLIAKIYQGLNPGGMLVLSEKIRFDDAPIQTLLEEQHLDFKRANGYSELEISQKRSALENVMKPDTLTTHQQRLTRQGFSHFSLWFQCFNFASMVAIK.

S-adenosyl-L-methionine-binding positions include Tyr-40, 65–67, 90–91, 118–119, Asn-133, and Arg-200; these read GCS, DN, and DI.

This sequence belongs to the class I-like SAM-binding methyltransferase superfamily. Cx-SAM synthase family. In terms of assembly, homodimer.

The catalysed reaction is prephenate + S-adenosyl-L-methionine = carboxy-S-adenosyl-L-methionine + 3-phenylpyruvate + H2O. Its function is as follows. Catalyzes the conversion of S-adenosyl-L-methionine (SAM) to carboxy-S-adenosyl-L-methionine (Cx-SAM). The chain is Carboxy-S-adenosyl-L-methionine synthase from Shewanella sp. (strain W3-18-1).